A 1380-amino-acid polypeptide reads, in one-letter code: Tripeptidyl-peptidase 2 (1380 aa).

A Peptidase S8 domain is found at 110-619 (STFIASLMPK…QGLMQVDKAY (510 aa)). Catalysis depends on charge relay system residues D145, H372, and S558. The segment at 1099 to 1143 (DEKEGKNPKDNPVSYPISYVVPPNKPEEDKKAASAPTCSKSVSER) is disordered. Residues 1110–1120 (PVSYPISYVVP) show a composition bias toward low complexity. Coiled coils occupy residues 1152 to 1181 (KIKFLGNLKQETEEERSEWRKLCTCLKSEY) and 1238 to 1300 (EDDE…ELTK).

The protein belongs to the peptidase S8 family. In terms of assembly, assembles into a large oligomeric complex containing two related proteins 153 and 142 kDa that are derived from the single TPP2 gene. The 142 kDa form mainly differs from the 153 kDa form by a truncation at the C-terminal end.

The enzyme catalyses Release of an N-terminal tripeptide from a polypeptide.. With respect to regulation, inhibited by alanine-alanine-phenylalanine-chloromethylketone, butabindide and phenylmethanesulfonyl fluoride (PMSF), but not by leupeptin, N-ethylmaleimide, EDTA, MG132 and lactacystin. Serine protease of the proteasome pathway that may function with the 20S proteasome to degrade oxidized proteins generated by environmental stress. The protein is Tripeptidyl-peptidase 2 (TPP2) of Arabidopsis thaliana (Mouse-ear cress).